A 68-amino-acid polypeptide reads, in one-letter code: UPF0291 protein TTE2340 (68 aa).

It belongs to the UPF0291 family.

Its subcellular location is the cytoplasm. In Caldanaerobacter subterraneus subsp. tengcongensis (strain DSM 15242 / JCM 11007 / NBRC 100824 / MB4) (Thermoanaerobacter tengcongensis), this protein is UPF0291 protein TTE2340.